We begin with the raw amino-acid sequence, 205 residues long: Helix-loop-helix protein 4 (205 aa).

The basic motif stretch occupies residues 3–16; that stretch reads MVVAKRNARERTRV. The bHLH domain occupies 3–56; it reads MVVAKRNARERTRVHTVNQAFLVLKQHLPSLRQFTKRVSKLRILNAAITYIDTL. The tract at residues 17–56 is helix-loop-helix motif; that stretch reads HTVNQAFLVLKQHLPSLRQFTKRVSKLRILNAAITYIDTL.

In terms of tissue distribution, expressed in the ADL sensory neurons.

The protein localises to the nucleus. Acts as a transcriptional regulator. May mediate transcriptional activation by binding to the E-box motif 5'-CANNTG-3'. Required for the correct morphology, terminal identity and function of the ADL sensory neurons by controlling the expression of the ADL-specific gene repertoire, including chemoreceptor encoding genes, ion channel encoding genes, neuropeptides and the neurotransmitter eat-4. Regulates the expression of the srh-234 chemoreceptor encoding gene in the ADL neurons under feeding conditions. Plays a role in the chemorepulsive response toward ascaroside pheromones mediated by the ADL sensory neurons. This Caenorhabditis elegans protein is Helix-loop-helix protein 4 (hlh-4).